The sequence spans 79 residues: Sulfur carrier protein TusA (79 aa).

The active-site Cysteine persulfide intermediate is the C17.

It belongs to the sulfur carrier protein TusA family.

Its subcellular location is the cytoplasm. Its function is as follows. Sulfur carrier protein which probably makes part of a sulfur-relay system. This is Sulfur carrier protein TusA from Actinobacillus succinogenes (strain ATCC 55618 / DSM 22257 / CCUG 43843 / 130Z).